We begin with the raw amino-acid sequence, 244 residues long: 3-deoxy-manno-octulosonate cytidylyltransferase (244 aa).

It belongs to the KdsB family.

The protein localises to the cytoplasm. The catalysed reaction is 3-deoxy-alpha-D-manno-oct-2-ulosonate + CTP = CMP-3-deoxy-beta-D-manno-octulosonate + diphosphate. The protein operates within nucleotide-sugar biosynthesis; CMP-3-deoxy-D-manno-octulosonate biosynthesis; CMP-3-deoxy-D-manno-octulosonate from 3-deoxy-D-manno-octulosonate and CTP: step 1/1. It functions in the pathway bacterial outer membrane biogenesis; lipopolysaccharide biosynthesis. Its function is as follows. Activates KDO (a required 8-carbon sugar) for incorporation into bacterial lipopolysaccharide in Gram-negative bacteria. The sequence is that of 3-deoxy-manno-octulosonate cytidylyltransferase from Rickettsia canadensis (strain McKiel).